Here is a 1347-residue protein sequence, read N- to C-terminus: DExH-box ATP-dependent RNA helicase DExH11 (1347 aa).

The disordered stretch occupies residues 263–291 (ELEGDDHTAGSESPKAEAEPDAKASISNE). Residues 267-284 (DDHTAGSESPKAEAEPDA) show a composition bias toward basic and acidic residues. Residues 369–524 (ICCLEKGESV…WIGRTKQKEI (156 aa)) form the Helicase ATP-binding domain. 382–389 (AHTSAGKT) provides a ligand contact to ATP. The short motif at 472–475 (DEVH) is the DEVH box element. Positions 566–625 (SQKKKNSNAVSVAPKQQMGSSAHQDGSKSQKHEAHSRGKQNKHSSVKDVGKSSYSGNSQN) are disordered. Positions 590–601 (DGSKSQKHEAHS) are enriched in basic and acidic residues. In terms of domain architecture, Helicase C-terminal spans 673 to 838 (DLTSSSEKSE…LTYIMILHLL (166 aa)).

The protein belongs to the DExH box helicase family. SKI2 subfamily. Component of the cytoplasmic SKI complex, which consists of SKI2, SKI3 and VIP3/SKI8. In terms of tissue distribution, expressed in vascular tissues of leaves and roots of young plants.

The protein resides in the cytoplasm. The enzyme catalyses ATP + H2O = ADP + phosphate + H(+). Functionally, component of the SKI complex which is thought to be involved in exosome-mediated RNA decay and associates with transcriptionally active genes in a manner dependent on PAF1 complex (PAF1C). Involved in the regulation of potassium deprivation stress response. The chain is DExH-box ATP-dependent RNA helicase DExH11 from Arabidopsis thaliana (Mouse-ear cress).